The chain runs to 426 residues: Probable glucose-6-phosphate isomerase (426 aa).

The active-site Proton donor is glutamate 272. Active-site residues include histidine 293 and lysine 404.

It belongs to the GPI family.

The protein resides in the cytoplasm. It carries out the reaction alpha-D-glucose 6-phosphate = beta-D-fructose 6-phosphate. It functions in the pathway carbohydrate biosynthesis; gluconeogenesis. The protein operates within carbohydrate degradation; glycolysis; D-glyceraldehyde 3-phosphate and glycerone phosphate from D-glucose: step 2/4. Functionally, catalyzes the reversible isomerization of glucose-6-phosphate to fructose-6-phosphate. The protein is Probable glucose-6-phosphate isomerase of Halobacterium salinarum (strain ATCC 700922 / JCM 11081 / NRC-1) (Halobacterium halobium).